A 185-amino-acid polypeptide reads, in one-letter code: MISSNEFKTGLTIEVDNDVYTIIEFQHVKPGKGAAFVRTKLKNVKTGGIIERKFNAGEKVPKAHVERREMQYLYKDGDHFVAMDNETYEQTSLTEAQIGDGVKYLKENMNLGILFFNGTVIGVDLPNTVILEVAHTEPGVRGDTATGGSKPATLETGAVVQVPFFVNEGEKLIIDTRTGNYVQRA.

It belongs to the elongation factor P family.

The protein localises to the cytoplasm. It functions in the pathway protein biosynthesis; polypeptide chain elongation. In terms of biological role, involved in peptide bond synthesis. Stimulates efficient translation and peptide-bond synthesis on native or reconstituted 70S ribosomes in vitro. Probably functions indirectly by altering the affinity of the ribosome for aminoacyl-tRNA, thus increasing their reactivity as acceptors for peptidyl transferase. The sequence is that of Elongation factor P from Desulfitobacterium hafniense (strain DSM 10664 / DCB-2).